The chain runs to 144 residues: Actin-associated protein FAM107A (144 aa).

The stretch at Leu-67 to Cys-94 forms a coiled coil. The Nuclear localization signal signature appears at Arg-74–Lys-84. Residues Gln-105–Phe-124 form a disordered region. A compositionally biased stretch (basic and acidic residues) spans Lys-112–Phe-124.

Belongs to the FAM107 family. Interacts with ACTB. Interacts with COMMD1; this interaction stabilizes COMMD1 in the nucleus. Interacts with MAP1A. Interacts with PRDX1. Interacts with F-actin.

It is found in the nucleus. The protein localises to the cytoplasm. The protein resides in the cytoskeleton. It localises to the stress fiber. Its subcellular location is the cell junction. It is found in the focal adhesion. The protein localises to the cell projection. The protein resides in the ruffle membrane. It localises to the synapse. Functionally, stress-inducible actin-binding protein that plays a role in synaptic and cognitive functions by modulating actin filamentous (F-actin) dynamics. Mediates polymerization of globular actin to F-actin. Also binds to, stabilizes and bundles F-actin. Involved in synaptic function by regulating neurite outgrowth in an actin-dependent manner and for the acquisition of hippocampus-dependent cognitive function, such as learning and long-term memory. Plays a role in the actin and microtubule cytoskeleton organization; negatively regulates focal adhesion (FA) assembly promoting malignant glial cell migration in an actin-, microtubule- and MAP1A-dependent manner. Also involved in neuroblastoma G1/S phase cell cycle progression and cell proliferation inhibition by stimulating ubiquitination of NF-kappa-B subunit RELA and NF-kappa-B degradation in a COMMD1- and actin-dependent manner. May play a role in tumor development. The polypeptide is Actin-associated protein FAM107A (FAM107A) (Pan troglodytes (Chimpanzee)).